The following is a 401-amino-acid chain: DNA replication and repair protein RecF (401 aa).

An ATP-binding site is contributed by 30 to 37 (GYNGIGKT).

Belongs to the RecF family.

The protein resides in the cytoplasm. Functionally, the RecF protein is involved in DNA metabolism; it is required for DNA replication and normal SOS inducibility. RecF binds preferentially to single-stranded, linear DNA. It also seems to bind ATP. This is DNA replication and repair protein RecF from Arthrobacter sp. (strain FB24).